Reading from the N-terminus, the 247-residue chain is MAGHSKFKNIMHRKGAQDKKRSALFSKLSREITVAARMGLPDPAMNARLRQAVITARKEGLPKDNIERSINKAAGGDGANYEEIRYEGFGPGGVALIIEALTDNRNRTATNVRTIVSKNGGNLGAGGSVSHGFDRLGLISYGLAAGDAEKVFEAALEAGADDVSSSEDGHEIWTAQDALHEVAKALEPVLGEPDGAKLAWRPQTQVTVGEDDAAKLLKLIDALDDDDDVQTVWGNYDVPEEVMAKLG.

The span at 1–14 (MAGHSKFKNIMHRK) shows a compositional bias: basic residues. Positions 1–21 (MAGHSKFKNIMHRKGAQDKKR) are disordered.

This sequence belongs to the TACO1 family.

It localises to the cytoplasm. This Rhizorhabdus wittichii (strain DSM 6014 / CCUG 31198 / JCM 15750 / NBRC 105917 / EY 4224 / RW1) (Sphingomonas wittichii) protein is Probable transcriptional regulatory protein Swit_2142.